The chain runs to 372 residues: tRNA-specific 2-thiouridylase MnmA (372 aa).

ATP is bound by residues 16-23 (GMSGGVDS) and methionine 42. The segment at 102-104 (NPD) is interaction with target base in tRNA. The active-site Nucleophile is the cysteine 107. An intrachain disulfide couples cysteine 107 to cysteine 205. Glycine 132 provides a ligand contact to ATP. The tract at residues 155 to 157 (KDQ) is interaction with tRNA. The active-site Cysteine persulfide intermediate is the cysteine 205. The interaction with tRNA stretch occupies residues 317–318 (RY).

The protein belongs to the MnmA/TRMU family.

It is found in the cytoplasm. It carries out the reaction S-sulfanyl-L-cysteinyl-[protein] + uridine(34) in tRNA + AH2 + ATP = 2-thiouridine(34) in tRNA + L-cysteinyl-[protein] + A + AMP + diphosphate + H(+). Functionally, catalyzes the 2-thiolation of uridine at the wobble position (U34) of tRNA, leading to the formation of s(2)U34. The protein is tRNA-specific 2-thiouridylase MnmA of Shewanella sp. (strain MR-7).